Consider the following 177-residue polypeptide: Probable inosine/xanthosine triphosphatase (177 aa).

The protein belongs to the YjjX NTPase family. In terms of assembly, homodimer. Requires Mg(2+) as cofactor. Mn(2+) is required as a cofactor.

It carries out the reaction XTP + H2O = XDP + phosphate + H(+). It catalyses the reaction ITP + H2O = IDP + phosphate + H(+). In terms of biological role, phosphatase that hydrolyzes non-canonical purine nucleotides such as XTP and ITP to their respective diphosphate derivatives. Probably excludes non-canonical purines from DNA/RNA precursor pool, thus preventing their incorporation into DNA/RNA and avoiding chromosomal lesions. In Pyrobaculum arsenaticum (strain DSM 13514 / JCM 11321 / PZ6), this protein is Probable inosine/xanthosine triphosphatase.